Reading from the N-terminus, the 463-residue chain is DNA-binding protein K10 (463 aa).

Positions 1-13 (MVSKNQFYQNWTM) are enriched in polar residues. Residues 1 to 304 (MVSKNQFYQN…RNGPGPGPMM (304 aa)) form a disordered region. Residues 14–50 (QSQQQHPHQMQQQFQQQQQPNLQHRNNQSNNNNCNNN) are compositionally biased toward low complexity. Positions 85–94 (QMMFSSSQMP) are enriched in polar residues. A run of 7 repeats spans residues 87-94 (MFSSSQMP), 95-102 (SDPLYIDF), 103-110 (SSPPPGFK), 111-118 (HNQVGSPK), 119-126 (KKSMKGIK), 127-134 (QQQHPSPN), and 135-142 (QQQPPSPN). The 7 X approximate tandem repeats stretch occupies residues 87 to 142 (MFSSSQMPSDPLYIDFSSPPPGFKHNQVGSPKKKSMKGIKQQQHPSPNQQQPPSPN). Low complexity predominate over residues 142–193 (NQQQHPSPNQQQHPSPNQQQHPNSNQQQHLSPNQQQGKMNNQNNNHMNQSQQ). Over residues 194–214 (PFNNQMNGSDWQRHPGNNPNQ) the composition is skewed to polar residues. 2 stretches are compositionally biased toward pro residues: residues 225-270 (GPPP…PPVP) and 282-291 (GGPPPPPPPL). A DNA-binding region (H-T-H motif) is located at residues 397–416 (DELFAQYKGQRDKFVSLYEA). The interval 426–463 (AATVKAKDAKSDKDKNAISSQSAAPKAGSAKDATIPNP) is disordered. Positions 430-441 (KAKDAKSDKDKN) are enriched in basic and acidic residues.

As to quaternary structure, interacts (via N-terminus) with sqd; the interaction is direct and may be involved in localization of sqd to the oocyte during oogenesis.

It is found in the nucleus. Its function is as follows. May be involved in localization of sqd to the oocyte during oogenesis. The protein is DNA-binding protein K10 (fs(1)K10) of Drosophila melanogaster (Fruit fly).